A 261-amino-acid chain; its full sequence is CD40 ligand (261 aa).

Residues 1–22 (MIETYNQPVPRSAATGPPVSMK) are Cytoplasmic-facing. The helical; Signal-anchor for type II membrane protein transmembrane segment at 23–43 (IFMYLLTVFLITQMIGSALFA) threads the bilayer. Residues 44-261 (VYLHRRLDKI…GFTSFGLLKL (218 aa)) are Extracellular-facing. The THD domain occupies 122–261 (IAAHVISEAS…GFTSFGLLKL (140 aa)). Cys178 and Cys218 are joined by a disulfide. The N-linked (GlcNAc...) asparagine glycan is linked to Asn240.

The protein belongs to the tumor necrosis factor family. In terms of assembly, homotrimer. Interacts with CD28. CD40 ligand, soluble form: Exists as either a monomer or a homotrimer. Forms a ternary complex between CD40 and integrins for CD40-CD40LG signaling. Post-translationally, the soluble form derives from the membrane form by proteolytic processing.

The protein localises to the cell membrane. It localises to the cell surface. It is found in the secreted. In terms of biological role, cytokine that acts as a ligand to CD40/TNFRSF5. Costimulates T-cell proliferation and cytokine production. Its cross-linking on T-cells generates a costimulatory signal which enhances the production of IL4 and IL10 in conjunction with the TCR/CD3 ligation and CD28 costimulation. Induces the activation of NF-kappa-B. Induces the activation of kinases MAPK8 and PAK2 in T-cells. Mediates B-cell proliferation in the absence of co-stimulus as well as IgE production in the presence of IL4. Involved in immunoglobulin class switching. Functionally, acts as a ligand for integrins, specifically ITGA5:ITGB1 and ITGAV:ITGB3; both integrins and the CD40 receptor are required for activation of CD40-CD40LG signaling, which have cell-type dependent effects, such as B-cell activation, NF-kappa-B signaling and anti-apoptotic signaling. The polypeptide is CD40 ligand (CD40LG) (Callithrix jacchus (White-tufted-ear marmoset)).